The sequence spans 263 residues: Glucosamine-6-phosphate deaminase 2 (263 aa).

Aspartate 82 acts as the Proton acceptor; for enolization step in catalysis. Asparagine 151 functions as the For ring-opening step in the catalytic mechanism. The Proton acceptor; for ring-opening step role is filled by histidine 153. Glutamate 158 (for ring-opening step) is an active-site residue.

This sequence belongs to the glucosamine/galactosamine-6-phosphate isomerase family. Homohexamer.

It catalyses the reaction alpha-D-glucosamine 6-phosphate + H2O = beta-D-fructose 6-phosphate + NH4(+). Its function is as follows. Catalyzes the reversible conversion of alpha-D-glucosamine 6-phosphate (GlcN-6P) into beta-D-fructose 6-phosphate (Fru-6P) and ammonium ion, a regulatory reaction step in de novo uridine diphosphate-N-acetyl-alpha-D-glucosamine (UDP-GlcNAc) biosynthesis via hexosamine pathway. The polypeptide is Glucosamine-6-phosphate deaminase 2 (GPI2) (Giardia intestinalis (Giardia lamblia)).